The following is a 775-amino-acid chain: WD repeat-containing protein pop1 (775 aa).

In terms of domain architecture, F-box spans 298-345 (KNFLTGFPAEITNLVLTHLDAPSLCAVSQVSHHWYKLVSSNEELWKSL). WD repeat units follow at residues 444 to 472 (EHEG…RVWD), 484 to 538 (GHTS…RLWS), 575 to 603 (GHTD…RVWK), 615 to 645 (GHVG…RIWN), and 657 to 687 (GHSN…RVWD).

Homodimer and heterodimer with pop2. Binds to cdc18, phosphorylated cig2, cul1, pip1 and skp1.

It localises to the nucleus. In terms of biological role, involved in maintenance of ploidy through proteasome dependent degradation of CDK inhibitor rum1 and S-phase initiator cdc18. Functions as a recognition factor for rum1 and cdc18, which are subsequently ubiquitinated and targeted to the 26S proteasome for degradation. Together with pop2, required for cig2 instability during G2 and M phase and cig2 degradation in exponentially growing cells. Regulates cell-cycle progression under starvation through the rum1 protein. This is WD repeat-containing protein pop1 (pop1) from Schizosaccharomyces pombe (strain 972 / ATCC 24843) (Fission yeast).